Here is a 357-residue protein sequence, read N- to C-terminus: Probable cinnamyl alcohol dehydrogenase 7/8 (357 aa).

A Zn(2+)-binding site is contributed by Cys47. NADP(+) is bound at residue Ser49. The Zn(2+) site is built by His69, Glu70, Cys100, Cys103, Cys106, Cys114, and Cys163. NADP(+) contacts are provided by residues Thr167, 188-193, 211-216, Thr251, Gly275, and 298-300; these read GLGGVG, SSSDKK, and SFI.

This sequence belongs to the zinc-containing alcohol dehydrogenase family. Homodimer. Zn(2+) is required as a cofactor.

It carries out the reaction (E)-cinnamyl alcohol + NADP(+) = (E)-cinnamaldehyde + NADPH + H(+). It catalyses the reaction (E)-coniferol + NADP(+) = (E)-coniferaldehyde + NADPH + H(+). The enzyme catalyses (E)-sinapyl alcohol + NADP(+) = (E)-sinapaldehyde + NADPH + H(+). The catalysed reaction is (E)-4-coumaroyl alcohol + NADP(+) = (E)-4-coumaraldehyde + NADPH + H(+). It carries out the reaction (E)-caffeyl alcohol + NADP(+) = (E)-caffeyl aldehyde + NADPH + H(+). It participates in aromatic compound metabolism; phenylpropanoid biosynthesis. Functionally, involved in lignin biosynthesis. Catalyzes the final step specific for the production of lignin monomers. Catalyzes the NADPH-dependent reduction of coniferaldehyde, 5-hydroxyconiferaldehyde, sinapaldehyde, 4-coumaraldehyde and caffeyl aldehyde to their respective alcohols. The polypeptide is Probable cinnamyl alcohol dehydrogenase 7/8 (CAD7) (Picea abies (Norway spruce)).